Here is a 179-residue protein sequence, read N- to C-terminus: NAD(P)H-quinone oxidoreductase subunit I, chloroplastic (179 aa).

4Fe-4S ferredoxin-type domains follow at residues 55-84 (GRIH…VDWR) and 95-124 (LNYS…MTEE). Positions 64, 67, 70, 74, 104, 107, 110, and 114 each coordinate [4Fe-4S] cluster.

The protein belongs to the complex I 23 kDa subunit family. In terms of assembly, NDH is composed of at least 16 different subunits, 5 of which are encoded in the nucleus. [4Fe-4S] cluster serves as cofactor.

It localises to the plastid. It is found in the chloroplast thylakoid membrane. The catalysed reaction is a plastoquinone + NADH + (n+1) H(+)(in) = a plastoquinol + NAD(+) + n H(+)(out). It catalyses the reaction a plastoquinone + NADPH + (n+1) H(+)(in) = a plastoquinol + NADP(+) + n H(+)(out). Its function is as follows. NDH shuttles electrons from NAD(P)H:plastoquinone, via FMN and iron-sulfur (Fe-S) centers, to quinones in the photosynthetic chain and possibly in a chloroplast respiratory chain. The immediate electron acceptor for the enzyme in this species is believed to be plastoquinone. Couples the redox reaction to proton translocation, and thus conserves the redox energy in a proton gradient. The protein is NAD(P)H-quinone oxidoreductase subunit I, chloroplastic of Nuphar advena (Common spatterdock).